Here is a 175-residue protein sequence, read N- to C-terminus: Ribosome maturation factor RimM (175 aa).

One can recognise a PRC barrel domain in the interval 98–175 (EGEYYWHQLE…EMRVDWDADF (78 aa)).

This sequence belongs to the RimM family. In terms of assembly, binds ribosomal protein uS19.

The protein resides in the cytoplasm. An accessory protein needed during the final step in the assembly of 30S ribosomal subunit, possibly for assembly of the head region. Essential for efficient processing of 16S rRNA. May be needed both before and after RbfA during the maturation of 16S rRNA. It has affinity for free ribosomal 30S subunits but not for 70S ribosomes. The chain is Ribosome maturation factor RimM from Pseudomonas aeruginosa (strain ATCC 15692 / DSM 22644 / CIP 104116 / JCM 14847 / LMG 12228 / 1C / PRS 101 / PAO1).